Here is a 205-residue protein sequence, read N- to C-terminus: Molybdenum cofactor guanylyltransferase (205 aa).

Residues 14–16, Lys-27, Asp-77, and Asp-107 each bind GTP; that span reads LAG. Asp-107 is a Mg(2+) binding site.

It belongs to the MobA family. As to quaternary structure, monomer. Mg(2+) is required as a cofactor.

It is found in the cytoplasm. The catalysed reaction is Mo-molybdopterin + GTP + H(+) = Mo-molybdopterin guanine dinucleotide + diphosphate. Transfers a GMP moiety from GTP to Mo-molybdopterin (Mo-MPT) cofactor (Moco or molybdenum cofactor) to form Mo-molybdopterin guanine dinucleotide (Mo-MGD) cofactor. This chain is Molybdenum cofactor guanylyltransferase, found in Burkholderia orbicola (strain MC0-3).